A 101-amino-acid polypeptide reads, in one-letter code: NAD(P)H-quinone oxidoreductase subunit 4L, chloroplastic (101 aa).

A run of 3 helical transmembrane segments spans residues 2 to 22 (MLEHVLVLSAYLFSIGIYGLI), 32 to 52 (MCLELILNAVNINLVTFSDFF), and 61 to 81 (IFSIFVIAIAAAEAAIGLAIV).

This sequence belongs to the complex I subunit 4L family. In terms of assembly, NDH is composed of at least 16 different subunits, 5 of which are encoded in the nucleus.

The protein resides in the plastid. It localises to the chloroplast thylakoid membrane. It catalyses the reaction a plastoquinone + NADH + (n+1) H(+)(in) = a plastoquinol + NAD(+) + n H(+)(out). It carries out the reaction a plastoquinone + NADPH + (n+1) H(+)(in) = a plastoquinol + NADP(+) + n H(+)(out). NDH shuttles electrons from NAD(P)H:plastoquinone, via FMN and iron-sulfur (Fe-S) centers, to quinones in the photosynthetic chain and possibly in a chloroplast respiratory chain. The immediate electron acceptor for the enzyme in this species is believed to be plastoquinone. Couples the redox reaction to proton translocation, and thus conserves the redox energy in a proton gradient. The protein is NAD(P)H-quinone oxidoreductase subunit 4L, chloroplastic of Cicer arietinum (Chickpea).